We begin with the raw amino-acid sequence, 338 residues long: Phosphate acyltransferase (338 aa).

The protein belongs to the PlsX family. Homodimer. Probably interacts with PlsY.

The protein resides in the cytoplasm. The enzyme catalyses a fatty acyl-[ACP] + phosphate = an acyl phosphate + holo-[ACP]. It participates in lipid metabolism; phospholipid metabolism. Functionally, catalyzes the reversible formation of acyl-phosphate (acyl-PO(4)) from acyl-[acyl-carrier-protein] (acyl-ACP). This enzyme utilizes acyl-ACP as fatty acyl donor, but not acyl-CoA. This Gloeobacter violaceus (strain ATCC 29082 / PCC 7421) protein is Phosphate acyltransferase.